A 148-amino-acid polypeptide reads, in one-letter code: Large ribosomal subunit protein bL9 (148 aa).

Part of the 50S ribosomal subunit.

Functionally, binds to the 23S rRNA. Extends more that 50 Angstroms beyond the surface of the 70S ribosome. The protein is Large ribosomal subunit protein bL9 (rplI) of Thermus thermophilus (strain ATCC 27634 / DSM 579 / HB8).